We begin with the raw amino-acid sequence, 294 residues long: Acetyl-coenzyme A carboxylase carboxyl transferase subunit beta (294 aa).

The CoA carboxyltransferase N-terminal domain occupies 25–294 (VWTKCTACEQ…PFLEPEIIAD (270 aa)). Positions 29, 32, 48, and 51 each coordinate Zn(2+). A C4-type zinc finger spans residues 29–51 (CTACEQVLYRDELKRHLEVCPKC).

This sequence belongs to the AccD/PCCB family. As to quaternary structure, acetyl-CoA carboxylase is a heterohexamer composed of biotin carboxyl carrier protein (AccB), biotin carboxylase (AccC) and two subunits each of ACCase subunit alpha (AccA) and ACCase subunit beta (AccD). Zn(2+) serves as cofactor.

The protein resides in the cytoplasm. The catalysed reaction is N(6)-carboxybiotinyl-L-lysyl-[protein] + acetyl-CoA = N(6)-biotinyl-L-lysyl-[protein] + malonyl-CoA. It participates in lipid metabolism; malonyl-CoA biosynthesis; malonyl-CoA from acetyl-CoA: step 1/1. Component of the acetyl coenzyme A carboxylase (ACC) complex. Biotin carboxylase (BC) catalyzes the carboxylation of biotin on its carrier protein (BCCP) and then the CO(2) group is transferred by the transcarboxylase to acetyl-CoA to form malonyl-CoA. This Actinobacillus succinogenes (strain ATCC 55618 / DSM 22257 / CCUG 43843 / 130Z) protein is Acetyl-coenzyme A carboxylase carboxyl transferase subunit beta.